The sequence spans 151 residues: Large ribosomal subunit protein bL9 (151 aa).

This sequence belongs to the bacterial ribosomal protein bL9 family.

Its function is as follows. Binds to the 23S rRNA. This Chloroherpeton thalassium (strain ATCC 35110 / GB-78) protein is Large ribosomal subunit protein bL9.